Here is a 1305-residue protein sequence, read N- to C-terminus: Nonribosomal peptide synthetase hkm11 (1305 aa).

The tract at residues 278–672 (TYGELDRWAK…GEIEHHLRPK (395 aa)) is adenylation. The Carrier domain occupies 788 to 864 (APTTEQEALL…SLASRMRQYN (77 aa)). Serine 825 bears the O-(pantetheine 4'-phosphoryl)serine mark. The segment at 926 to 1166 (KGQLDRHQLQ…LCLNITAVRV (241 aa)) is condensation.

This sequence belongs to the NRP synthetase family.

The catalysed reaction is hancockiamide D + (E)-cinnamate + ATP = hancockiamide A + AMP + diphosphate. It carries out the reaction hancockiamide H + (E)-cinnamate + ATP = hancockiamide G + AMP + diphosphate. It functions in the pathway secondary metabolite biosynthesis. Functionally, nonribosomal peptide synthetase; part of the gene cluster that mediates the biosynthesis of hancockiamides, an unusual new family of N-cinnamoylated piperazines. The NRPS hkm10 and the NmrA-like reductase hkm9 are proposed to convert two molecules of L-Phe to the intermediary piperazine called xenocockiamide A. Xenocockiamide A is then converted to hancockiamide D via a series of hydroxylations and O-methylations. The tyrosinase hkm6 may catalyze an aromatic hydroxylation, then the 2-oxoglutarate-dependent Fe(II) dioxygenase hkm4 and the FAD-dependent phenol hydroxylase hkm7 may catalyze consecutive hydroxylations to install 2 more hydroxy groups, and the methyltransferase hkm8 probably catalyzes two methylations using 2 molecules of S-adenosyl-L-methionine (SAM). The NRPS hkm11 activates and transfers trans-cinnamate supplied by the PAL hkm12 to hancockiamide D and produces hancockiamide A. NRPS Hkm11 has the flexibility to tolerate the bulky hancockiamide G as a substrate and the absence of the acetyl-transferase hkm3 opens up the opportunity for hkm11 to introduce a second N-cinnamoyl moiety. The cytochrome P450 monooxygenase hkm5 catalyzes the methylenedioxy bridge formation, converting hancockiamide A into hancockiamide G. Hkm5 can also convert hancockiamide B into hancockiamide C, and hancockiamide D into hancockiamide H. The N-acetyltransferase hkm3 finally transfers an acetyl group to 1-N of piperazine, converting hancockiamide A into hancockiamide B and hancockiamide G into hancockiamide C. This is Nonribosomal peptide synthetase hkm11 from Aspergillus hancockii.